A 480-amino-acid chain; its full sequence is DnaJ homolog subfamily A member 3, mitochondrial (480 aa).

Omega-N-methylarginine; by CARM1 is present on arginine 58. Residues 93 to 158 (DYYQILGVPR…VKRKQYDAYG (66 aa)) form the J domain. The residue at position 134 (lysine 134) is an N6-acetyllysine. Residues 223 to 301 (GVNKEFTVNI…CRGAGQAKQK (79 aa)) form a CR-type zinc finger. Cysteine 236 is a binding site for Zn(2+). CXXCXGXG motif repeat units follow at residues 236–243 (CERCDGKG), 253–260 (CHYCGGSG), 275–282 (CRRCGGRG), and 289–296 (CVVCRGAG). An Omega-N-methylarginine; by CARM1 modification is found at arginine 238. Zn(2+)-binding residues include cysteine 239, cysteine 253, cysteine 256, cysteine 275, cysteine 278, cysteine 289, and cysteine 292. An Omega-N-methylarginine; by CARM1 modification is found at arginine 293. At serine 398 the chain carries Phosphoserine. The segment at 437 to 468 (TVNGVTHTSTGGRTMDSSAGSKDRREAGEDNE) is disordered. Over residues 439–456 (NGVTHTSTGGRTMDSSAG) the composition is skewed to polar residues.

As to quaternary structure, interacts with JAK2, HSPA9B and IFN-gammaR2 chain. Interacts with Ras GTPase-activating protein 1 (RASA1). Isoform 2 interacts with MUSK (via the cytoplasmic domain). Post-translationally, tyrosine phosphorylated.

Its subcellular location is the mitochondrion matrix. It is found in the cytoplasm. It localises to the cytosol. The protein localises to the postsynaptic cell membrane. Modulates apoptotic signal transduction or effector structures within the mitochondrial matrix. Affect cytochrome C release from the mitochondria and caspase 3 activation, but not caspase 8 activation. Isoform 1 increases apoptosis triggered by both TNF and the DNA-damaging agent mytomycin C; in sharp contrast, isoform 2 suppresses apoptosis. Can modulate IFN-gamma-mediated transcriptional activity. Isoform 2 may play a role in neuromuscular junction development as an effector of the MUSK signaling pathway. This chain is DnaJ homolog subfamily A member 3, mitochondrial (Dnaja3), found in Mus musculus (Mouse).